The sequence spans 140 residues: Low calcium response locus protein T (140 aa).

The polypeptide is Low calcium response locus protein T (lcrT) (Yersinia pestis).